Consider the following 79-residue polypeptide: Acyl carrier protein (79 aa).

The region spanning 2–77 (ADFEARVKEI…SAIDYVKTHV (76 aa)) is the Carrier domain. Ser37 bears the O-(pantetheine 4'-phosphoryl)serine mark.

Belongs to the acyl carrier protein (ACP) family. In terms of processing, 4'-phosphopantetheine is transferred from CoA to a specific serine of apo-ACP by AcpS. This modification is essential for activity because fatty acids are bound in thioester linkage to the sulfhydryl of the prosthetic group.

Its subcellular location is the cytoplasm. It functions in the pathway lipid metabolism; fatty acid biosynthesis. Carrier of the growing fatty acid chain in fatty acid biosynthesis. The polypeptide is Acyl carrier protein (Endomicrobium trichonymphae).